The chain runs to 475 residues: Aminodeoxychorismate synthase component 1 (475 aa).

The protein belongs to the anthranilate synthase component I family. In terms of assembly, monomer. Heterodimer consisting of two non-identical subunits: a glutamine amidotransferase subunit (PabA) and a aminodeoxychorismate synthase subunit (PabB). Mg(2+) is required as a cofactor.

It carries out the reaction chorismate + L-glutamine = 4-amino-4-deoxychorismate + L-glutamate. Its pathway is cofactor biosynthesis; tetrahydrofolate biosynthesis; 4-aminobenzoate from chorismate: step 1/2. Functionally, part of a heterodimeric complex that catalyzes the two-step biosynthesis of 4-amino-4-deoxychorismate (ADC), a precursor of p-aminobenzoate (PABA) and tetrahydrofolate. In the first step, a glutamine amidotransferase (PabA) generates ammonia as a substrate that, along with chorismate, is used in the second step, catalyzed by aminodeoxychorismate synthase (PabB) to produce ADC. This chain is Aminodeoxychorismate synthase component 1 (pabB), found in Streptomyces lividans.